Consider the following 476-residue polypeptide: Protein DETOXIFICATION 1 (476 aa).

12 consecutive transmembrane segments (helical) span residues 35-55 (AAPMATVTIAQYLLPVISVMV), 66-86 (GVALANSFTNVTGFSIMCGLV), 117-137 (IPICFLISILWLYIEKILISL), 146-166 (IAGSYAFWLIPALFGQAIVIP), 184-204 (AVTTLLFHVLVCWTLVFLFGL), 208-228 (GPAMATSVSFWFYAVILSCYV), 260-280 (AAMICLEWWLFEILILCSGLL), 289-309 (VLSICLTIETLHYVISAGVAA), 331-351 (VLAGLCLWIVESAFFSILLFT), 370-390 (VADLTPLLCLSFILDGFTAVL), 402-422 (IGAWNNTVSYYLVGAPVGIYL), and 433-453 (LWCGVVVGSTVQATILAIVTA).

Belongs to the multi antimicrobial extrusion (MATE) (TC 2.A.66.1) family. As to expression, ubiquitous. Highest expression in flowers and stems.

It localises to the cell membrane. In terms of biological role, efflux carrier for plant-derived alkaloids, antibiotics, heavy metal and other toxic compounds. Involved in cadmium detoxification. Requires probably a proton-motive force for the efflux. The sequence is that of Protein DETOXIFICATION 1 from Arabidopsis thaliana (Mouse-ear cress).